We begin with the raw amino-acid sequence, 88 residues long: UPF0298 protein BA_4142/GBAA_4142/BAS3844 (88 aa).

Belongs to the UPF0298 family.

It is found in the cytoplasm. The protein is UPF0298 protein BA_4142/GBAA_4142/BAS3844 of Bacillus anthracis.